A 280-amino-acid chain; its full sequence is Probable endonuclease 4 (280 aa).

Zn(2+)-binding residues include His-69, His-109, Glu-145, Asp-179, His-182, His-216, Asp-229, His-231, and Glu-261.

It belongs to the AP endonuclease 2 family. Zn(2+) serves as cofactor.

The catalysed reaction is Endonucleolytic cleavage to 5'-phosphooligonucleotide end-products.. Endonuclease IV plays a role in DNA repair. It cleaves phosphodiester bonds at apurinic or apyrimidinic (AP) sites, generating a 3'-hydroxyl group and a 5'-terminal sugar phosphate. This chain is Probable endonuclease 4, found in Actinobacillus pleuropneumoniae serotype 5b (strain L20).